The sequence spans 407 residues: 12S rRNA N(4)-cytidine methyltransferase METTL15 (407 aa).

S-adenosyl-L-methionine contacts are provided by residues 100–102, aspartate 119, phenylalanine 146, aspartate 169, and glutamine 176; that span reads GGH. Residue serine 358 is modified to Phosphoserine.

Belongs to the methyltransferase superfamily. RsmH family.

The protein resides in the mitochondrion matrix. The enzyme catalyses cytidine(839) in 12S rRNA + S-adenosyl-L-methionine = N(4)-methylcytidine(839) in 12S rRNA + S-adenosyl-L-homocysteine + H(+). Its function is as follows. N4-methylcytidine (m4C) methyltransferase responsible for the methylation of position C839 in mitochondrial 12S rRNA. Involved in the stabilization of 12S rRNA folding, therefore facilitating the assembly of the mitochondrial small ribosomal subunits. This is 12S rRNA N(4)-cytidine methyltransferase METTL15 (METTL15) from Pongo abelii (Sumatran orangutan).